Here is a 458-residue protein sequence, read N- to C-terminus: Argininosuccinate lyase (458 aa).

It belongs to the lyase 1 family. Argininosuccinate lyase subfamily.

The protein localises to the cytoplasm. The catalysed reaction is 2-(N(omega)-L-arginino)succinate = fumarate + L-arginine. It functions in the pathway amino-acid biosynthesis; L-arginine biosynthesis; L-arginine from L-ornithine and carbamoyl phosphate: step 3/3. This is Argininosuccinate lyase from Neisseria meningitidis serogroup C / serotype 2a (strain ATCC 700532 / DSM 15464 / FAM18).